Reading from the N-terminus, the 135-residue chain is Small ribosomal subunit protein uS12 (135 aa).

A disordered region spans residues 1–23 (MPTINQLVRKGRHSKTTKSDSPA). Aspartate 102 is subject to 3-methylthioaspartic acid.

This sequence belongs to the universal ribosomal protein uS12 family. As to quaternary structure, part of the 30S ribosomal subunit. Contacts proteins S8 and S17. May interact with IF1 in the 30S initiation complex.

With S4 and S5 plays an important role in translational accuracy. Functionally, interacts with and stabilizes bases of the 16S rRNA that are involved in tRNA selection in the A site and with the mRNA backbone. Located at the interface of the 30S and 50S subunits, it traverses the body of the 30S subunit contacting proteins on the other side and probably holding the rRNA structure together. The combined cluster of proteins S8, S12 and S17 appears to hold together the shoulder and platform of the 30S subunit. This chain is Small ribosomal subunit protein uS12, found in Lactobacillus gasseri (strain ATCC 33323 / DSM 20243 / BCRC 14619 / CIP 102991 / JCM 1131 / KCTC 3163 / NCIMB 11718 / NCTC 13722 / AM63).